Reading from the N-terminus, the 385-residue chain is 3-hydroxyisobutyryl-CoA hydrolase, mitochondrial (385 aa).

Residues Glu120, Gly145, Glu168, and Asp176 each contribute to the substrate site.

The protein belongs to the enoyl-CoA hydratase/isomerase family.

The protein resides in the mitochondrion. It carries out the reaction 3-hydroxy-2-methylpropanoyl-CoA + H2O = 3-hydroxy-2-methylpropanoate + CoA + H(+). The protein operates within amino-acid degradation; L-valine degradation. Hydrolyzes 3-hydroxyisobutyryl-CoA (HIBYL-CoA), a saline catabolite. Has high activity toward isobutyryl-CoA. Could be an isobutyryl-CoA dehydrogenase that functions in valine catabolism. Also hydrolyzes 3-hydroxypropanoyl-CoA. This chain is 3-hydroxyisobutyryl-CoA hydrolase, mitochondrial (hibch), found in Xenopus laevis (African clawed frog).